Consider the following 94-residue polypeptide: Large ribosomal subunit protein uL22 (94 aa).

The protein belongs to the universal ribosomal protein uL22 family. As to quaternary structure, part of the 50S ribosomal subunit.

This protein binds specifically to 23S rRNA; its binding is stimulated by other ribosomal proteins, e.g. L4, L17, and L20. It is important during the early stages of 50S assembly. It makes multiple contacts with different domains of the 23S rRNA in the assembled 50S subunit and ribosome. Its function is as follows. The globular domain of the protein is located near the polypeptide exit tunnel on the outside of the subunit, while an extended beta-hairpin is found that lines the wall of the exit tunnel in the center of the 70S ribosome. The chain is Large ribosomal subunit protein uL22 (rplV) from Tomato big bud phytoplasma.